The primary structure comprises 234 residues: Glutathione S-transferase U11 (234 aa).

The 80-residue stretch at 11–90 (EYVKLLGAWP…YVDETWLSGP (80 aa)) folds into the GST N-terminal domain. Glutathione is bound by residues 21–22 (SP), 47–48 (LS), 61–62 (QI), and 74–75 (ES). Residues 96–228 (DPFDRAVARF…KLVQFARLKF (133 aa)) form the GST C-terminal domain.

It belongs to the GST superfamily. Tau family.

It is found in the cytoplasm. Its subcellular location is the cytosol. The enzyme catalyses RX + glutathione = an S-substituted glutathione + a halide anion + H(+). In terms of biological role, may be involved in the conjugation of reduced glutathione to a wide number of exogenous and endogenous hydrophobic electrophiles and have a detoxification role against certain herbicides. The chain is Glutathione S-transferase U11 (GSTU11) from Arabidopsis thaliana (Mouse-ear cress).